Consider the following 129-residue polypeptide: ATP synthase epsilon chain (129 aa).

Belongs to the ATPase epsilon chain family. In terms of assembly, F-type ATPases have 2 components, CF(1) - the catalytic core - and CF(0) - the membrane proton channel. CF(1) has five subunits: alpha(3), beta(3), gamma(1), delta(1), epsilon(1). CF(0) has three main subunits: a, b and c.

It localises to the cell inner membrane. Functionally, produces ATP from ADP in the presence of a proton gradient across the membrane. The protein is ATP synthase epsilon chain of Campylobacter jejuni subsp. jejuni serotype O:6 (strain 81116 / NCTC 11828).